The following is a 101-amino-acid chain: Phosphoprotein OPG062 (101 aa).

A disordered region spans residues 51-73 (PSSPACERRPSSPSRCERMNNPR). 2 positions are modified to phosphoserine: S53 and S62. A compositionally biased stretch (basic and acidic residues) spans 56-70 (CERRPSSPSRCERMN).

Belongs to the orthopoxvirus OPG062 family. Self-associates to form high molecular-weight forms. Interacts with protein OPG157/A30. Interacts with host RICTOR and RPTOR; these interactions disrupt the mTORC1 and mTORC2 crosstalk. In terms of processing, phosphorylated on two serines. While these phosphorylations do not play a role in virion assembly; they are essential for the interaction with host RICTOR and RPTOR.

Its subcellular location is the virion. Its function is as follows. Plays an essential role in virion assembly and morphogenesis. Also plays a role in the inhibition of host immune response by dysregulating mTOR. Sequesters host RICTOR and RPTOR, thereby disrupting mTORC1 and mTORC2 crosstalk. In turn, blocks the host antiviral response in part through mTOR-dependent degradation of cGAS, the primary poxvirus sensor. This chain is Phosphoprotein OPG062 (OPG062), found in Vaccinia virus (strain Western Reserve) (VACV).